The primary structure comprises 156 residues: Small ribosomal subunit protein uS7 (156 aa).

Belongs to the universal ribosomal protein uS7 family. Part of the 30S ribosomal subunit. Contacts proteins S9 and S11.

In terms of biological role, one of the primary rRNA binding proteins, it binds directly to 16S rRNA where it nucleates assembly of the head domain of the 30S subunit. Is located at the subunit interface close to the decoding center, probably blocks exit of the E-site tRNA. The sequence is that of Small ribosomal subunit protein uS7 from Treponema pallidum (strain Nichols).